Reading from the N-terminus, the 375-residue chain is Ribosomal RNA large subunit methyltransferase G (375 aa).

The protein belongs to the methyltransferase superfamily. RlmG family.

It is found in the cytoplasm. The enzyme catalyses guanosine(1835) in 23S rRNA + S-adenosyl-L-methionine = N(2)-methylguanosine(1835) in 23S rRNA + S-adenosyl-L-homocysteine + H(+). Functionally, specifically methylates the guanine in position 1835 (m2G1835) of 23S rRNA. In Erwinia tasmaniensis (strain DSM 17950 / CFBP 7177 / CIP 109463 / NCPPB 4357 / Et1/99), this protein is Ribosomal RNA large subunit methyltransferase G.